Here is a 152-residue protein sequence, read N- to C-terminus: Ribosome maturation factor RimP (152 aa).

The protein belongs to the RimP family.

It localises to the cytoplasm. Functionally, required for maturation of 30S ribosomal subunits. In Porphyromonas gingivalis (strain ATCC BAA-308 / W83), this protein is Ribosome maturation factor RimP.